Reading from the N-terminus, the 310-residue chain is Ribonuclease Z (310 aa).

His-63, His-65, Asp-67, His-68, His-141, Asp-212, and His-270 together coordinate Zn(2+). The active-site Proton acceptor is Asp-67.

Belongs to the RNase Z family. In terms of assembly, homodimer. The cofactor is Zn(2+).

The enzyme catalyses Endonucleolytic cleavage of RNA, removing extra 3' nucleotides from tRNA precursor, generating 3' termini of tRNAs. A 3'-hydroxy group is left at the tRNA terminus and a 5'-phosphoryl group is left at the trailer molecule.. Functionally, zinc phosphodiesterase, which displays some tRNA 3'-processing endonuclease activity. Probably involved in tRNA maturation, by removing a 3'-trailer from precursor tRNA. The protein is Ribonuclease Z of Limosilactobacillus fermentum (strain NBRC 3956 / LMG 18251) (Lactobacillus fermentum).